Reading from the N-terminus, the 97-residue chain is YcgL domain-containing protein PA1295 (97 aa).

One can recognise a YcgL domain in the interval 3–87 (RICSVYKSPR…GEEEYIEHLP (85 aa)).

This is YcgL domain-containing protein PA1295 from Pseudomonas aeruginosa (strain ATCC 15692 / DSM 22644 / CIP 104116 / JCM 14847 / LMG 12228 / 1C / PRS 101 / PAO1).